Reading from the N-terminus, the 522-residue chain is MSLTIPSPASGTSTSATTDTAPAAAPQRTYQVRTFGCQMNVHDSERMAGMLEDAGYVPASGENADVVVFNTCAVRENADNKLYGNLGMLAPVKAANPGMQIAVGGCLAQKDRETILKKAPWVDAVFGTHNVGALPALLDRARHNNEAQLEILESLDVFPSTLPTKRDSVYSGWVSISVGCNNTCTFCIVPALRGKEKDRRPGDILAEIQALVDDGAIEVTLLGQNVNSYGVEFGDRQAFSKLLRACGEIQGLERVRFTSPHPAAFTDDVIDAMAETPNVMPQLHMPLQSGSDKVLKDMKRSYRSTKFLGILDKVRERIPHAAISTDIIVGFPGETEEDFQATLDVVEKSRFATAFTFQYSKRPGTPAADLPDQLPKAVVQERFERLTALQDRIAAEENARQLGRRVEVMVTAQSGRKSEETHRLSGRSQDQRLVHFSVPEGAEKPRPGDLVTVTITEAAAFHLVADPASAADYSLRRSRAGDAWDRSQADSCGAPVAGGGAGSNGGKGGVSLGMPALPVRRS.

Positions 1 to 26 (MSLTIPSPASGTSTSATTDTAPAAAP) are enriched in low complexity. The disordered stretch occupies residues 1–27 (MSLTIPSPASGTSTSATTDTAPAAAPQ). The MTTase N-terminal domain occupies 28 to 143 (RTYQVRTFGC…LPALLDRARH (116 aa)). 6 residues coordinate [4Fe-4S] cluster: cysteine 37, cysteine 72, cysteine 106, cysteine 180, cysteine 184, and cysteine 187. The Radical SAM core domain occupies 166-396 (RDSVYSGWVS…TALQDRIAAE (231 aa)). Residues 399–469 (ARQLGRRVEV…AFHLVADPAS (71 aa)) enclose the TRAM domain. A disordered region spans residues 481–522 (GDAWDRSQADSCGAPVAGGGAGSNGGKGGVSLGMPALPVRRS). Over residues 496–511 (VAGGGAGSNGGKGGVS) the composition is skewed to gly residues.

The protein belongs to the methylthiotransferase family. MiaB subfamily. In terms of assembly, monomer. The cofactor is [4Fe-4S] cluster.

Its subcellular location is the cytoplasm. It catalyses the reaction N(6)-dimethylallyladenosine(37) in tRNA + (sulfur carrier)-SH + AH2 + 2 S-adenosyl-L-methionine = 2-methylsulfanyl-N(6)-dimethylallyladenosine(37) in tRNA + (sulfur carrier)-H + 5'-deoxyadenosine + L-methionine + A + S-adenosyl-L-homocysteine + 2 H(+). Functionally, catalyzes the methylthiolation of N6-(dimethylallyl)adenosine (i(6)A), leading to the formation of 2-methylthio-N6-(dimethylallyl)adenosine (ms(2)i(6)A) at position 37 in tRNAs that read codons beginning with uridine. The chain is tRNA-2-methylthio-N(6)-dimethylallyladenosine synthase from Arthrobacter sp. (strain FB24).